We begin with the raw amino-acid sequence, 273 residues long: SUMO-1 cysteine protease S273R (273 aa).

Catalysis depends on residues His168 and Asn187. Substrate is bound at residue Gln226. Cys232 functions as the Nucleophile in the catalytic mechanism.

Belongs to the peptidase C63 family.

It localises to the host cytoplasm. The protein localises to the virion. Its function is as follows. Cysteine protease that plays several role during infection including processing of the structural polyprotein or inhibition of the host immune response. Catalyzes the maturation of the pp220 and pp62 polyprotein precursors into core-shell proteins. Plays a role in the disruption of host pyroptosis via specific cleavage of gasdermin D/GSDMD. In addition, strongly decreases the host cGAS-STING signaling by targeting IKBKE via its enzymatic activity. Also impairs host FOXJ1-mediated antiviral effect via degradation of FOXJ1. In Ornithodoros (relapsing fever ticks), this protein is SUMO-1 cysteine protease S273R.